Here is a 351-residue protein sequence, read N- to C-terminus: Adenine deaminase (351 aa).

Zn(2+)-binding residues include H20, H22, and H200. E203 acts as the Proton donor in catalysis. Residue D281 participates in Zn(2+) binding. Residue D282 participates in substrate binding.

The protein belongs to the metallo-dependent hydrolases superfamily. Adenosine and AMP deaminases family. Adenine deaminase type 2 subfamily. Requires Zn(2+) as cofactor.

It carries out the reaction adenine + H2O + H(+) = hypoxanthine + NH4(+). Functionally, catalyzes the hydrolytic deamination of adenine to hypoxanthine. Plays an important role in the purine salvage pathway and in nitrogen catabolism. The polypeptide is Adenine deaminase (Cupriavidus necator (strain ATCC 17699 / DSM 428 / KCTC 22496 / NCIMB 10442 / H16 / Stanier 337) (Ralstonia eutropha)).